The chain runs to 1065 residues: Pumilio domain-containing protein P35G2.14 (1065 aa).

3 disordered regions span residues 1–78 (MHQD…SLRS), 130–265 (ITSK…PWSP), and 422–573 (TTGF…NTNS). The span at 16-44 (RNTISKPSNNNPPLDMSSLNNDFGQQLDS) shows a compositional bias: polar residues. Positions 59–77 (NPSSNFNDSNRSNISSSLR) are enriched in low complexity. Composition is skewed to polar residues over residues 134–151 (LQNN…RGRT) and 169–189 (SSVS…HFNP). Low complexity-rich tracts occupy residues 190–224 (SSSS…SEII) and 236–246 (SASNAANSGSN). Composition is skewed to polar residues over residues 247-262 (TIRA…NTLP) and 434-455 (GLNT…TFEV). Threonine 260 carries the post-translational modification Phosphothreonine. Residues 470-483 (PLGSLSSRPKPSSS) are compositionally biased toward low complexity. Polar residues-rich tracts occupy residues 495–522 (LKTS…SSSP) and 529–551 (IHNQ…NGLR). 3 positions are modified to phosphoserine: serine 506, serine 511, and serine 515. Position 554 is a phosphothreonine (threonine 554). A compositionally biased stretch (low complexity) spans 559 to 573 (NISTRSSSESNNTNS). Residues 592-666 (HALWVGNLPS…DPVCISFAKV (75 aa)) form the RRM domain. Residues 712–1065 (DLSKIYQILN…ELKKLAEVCA (354 aa)) enclose the PUM-HD domain. Pumilio repeat units lie at residues 771 to 808 (AINW…MMLE), 809 to 844 (RIAP…RLIA), 846 to 884 (HLQP…AILN), 886 to 917 (FWVI…VLVA), 919 to 954 (AITV…ILLT), and 956 to 993 (RFVQ…LVVD).

Its subcellular location is the cytoplasm. The protein is Pumilio domain-containing protein P35G2.14 of Schizosaccharomyces pombe (strain 972 / ATCC 24843) (Fission yeast).